Consider the following 283-residue polypeptide: Glutamate racemase (283 aa).

Substrate is bound by residues 28–29 and 60–61; these read DS and YG. Catalysis depends on Cys92, which acts as the Proton donor/acceptor. Substrate is bound at residue 93 to 94; that stretch reads NT. The Proton donor/acceptor role is filled by Cys204. Residue 205–206 coordinates substrate; that stretch reads TH.

The protein belongs to the aspartate/glutamate racemases family.

It catalyses the reaction L-glutamate = D-glutamate. The protein operates within cell wall biogenesis; peptidoglycan biosynthesis. Functionally, provides the (R)-glutamate required for cell wall biosynthesis. This Salmonella choleraesuis (strain SC-B67) protein is Glutamate racemase.